A 1152-amino-acid chain; its full sequence is Fork-head transcriptional regulator FHL1 (1152 aa).

The tract at residues 55 to 147 (TATNNVLPES…SEDDNNNNNN (93 aa)) is disordered. The span at 64–83 (SNKKDKPIDTQDLHEDDPKA) shows a compositional bias: basic and acidic residues. Residues 87-101 (TTSNGESTSNSNSVS) are compositionally biased toward low complexity. Over residues 126 to 135 (VPVTSNSKSL) the composition is skewed to polar residues. An FHA domain is found at 171-229 (VVLGRKSNDETLQQNVDVHLSSKKAISRRHAKIFYNFGTQRFEISILGRNGAFVDNVFV). 2 disordered regions span residues 254–362 (LPSN…RKNS) and 514–557 (KKQL…PPAS). Positions 271-286 (KQFNPSDAINLRSNLY) are enriched in polar residues. Positions 296–307 (PKRKPQPSKKVK) are enriched in basic residues. The span at 328 to 358 (TTAISPTASISTSTNAATAATATTPATTTAA) shows a compositional bias: low complexity. Coiled coils occupy residues 449–537 (DDDE…SLAK) and 734–777 (ELYI…QKSL). The fork-head DNA-binding region spans 659-756 (KPNISFQIMI…QREIAKAKAK (98 aa)). Disordered regions lie at residues 787–833 (ASPY…GTSP), 846–867 (RGNG…MNDP), 951–1010 (HEGI…VPQQ), and 1057–1152 (PAMQ…AKTE). 3 stretches are compositionally biased toward low complexity: residues 804-826 (SQSS…GSTT), 851-863 (TPAT…SLPA), and 973-987 (TTTS…TTPQ). Composition is skewed to pro residues over residues 996 to 1006 (VKPPISTPLPQ) and 1072 to 1082 (TSVPVPLPVPS). 2 stretches are compositionally biased toward polar residues: residues 1115-1128 (SSLS…SNKP) and 1143-1152 (QATNKIAKTE).

As to quaternary structure, interacts with IFH1 and TBF1.

The protein localises to the nucleus. In terms of biological role, in complex with IFH1, acts as a transcriptional regulator of rRNA and ribosomal protein genes. The FHL1-IFH1 complex is targeted to the ribosomal protein genes by the DNA-binding factor TBF1. In Candida albicans (strain SC5314 / ATCC MYA-2876) (Yeast), this protein is Fork-head transcriptional regulator FHL1 (FHL1).